We begin with the raw amino-acid sequence, 336 residues long: Dihydroorotate dehydrogenase (quinone) (336 aa).

Residues 62-66 (AGLDK) and Thr86 contribute to the FMN site. Lys66 contacts substrate. Residue 111–115 (NRFGF) participates in substrate binding. FMN is bound by residues Asn139 and Asn172. Asn172 contributes to the substrate binding site. The active-site Nucleophile is the Ser175. Substrate is bound at residue Asn177. FMN is bound by residues Lys217 and Thr245. A substrate-binding site is contributed by 246-247 (NT). Residues Gly268, Gly297, and 318–319 (YS) each bind FMN.

It belongs to the dihydroorotate dehydrogenase family. Type 2 subfamily. In terms of assembly, monomer. Requires FMN as cofactor.

The protein localises to the cell membrane. It carries out the reaction (S)-dihydroorotate + a quinone = orotate + a quinol. It functions in the pathway pyrimidine metabolism; UMP biosynthesis via de novo pathway; orotate from (S)-dihydroorotate (quinone route): step 1/1. Its function is as follows. Catalyzes the conversion of dihydroorotate to orotate with quinone as electron acceptor. The polypeptide is Dihydroorotate dehydrogenase (quinone) (Photobacterium profundum (strain SS9)).